A 319-amino-acid chain; its full sequence is Probable cell division protein WhiA (319 aa).

The H-T-H motif DNA-binding region spans Ser277–Lys310.

Belongs to the WhiA family.

Involved in cell division and chromosome segregation. This chain is Probable cell division protein WhiA, found in Tropheryma whipplei (strain Twist) (Whipple's bacillus).